The primary structure comprises 494 residues: Glutamate decarboxylase 2 (494 aa).

Position 276 is an N6-(pyridoxal phosphate)lysine (lysine 276). Residues 463–494 are calmodulin-binding; the sequence is VKEKKMEKEILMEVIVGWRKFVKERKKMNGVC.

This sequence belongs to the group II decarboxylase family. As to quaternary structure, homohexamer. Interacts with calmodulin. The cofactor is pyridoxal 5'-phosphate. As to expression, expressed in roots, inflorescence stems, flowers, siliques and leaves.

It catalyses the reaction L-glutamate + H(+) = 4-aminobutanoate + CO2. Up-regulated by calmodulin binding at physiological pH. Its function is as follows. Catalyzes the conversion of glutamate to 4-aminobutanoate (GABA). The calmodulin-binding is calcium-dependent and it is proposed to directly or indirectly form a calcium regulated control of GABA biosynthesis. This chain is Glutamate decarboxylase 2 (GAD2), found in Arabidopsis thaliana (Mouse-ear cress).